Here is a 234-residue protein sequence, read N- to C-terminus: Zinc transport system ATP-binding protein AdcC (234 aa).

Residues 4-234 (ITVEDLSFYY…HENGQEVGHA (231 aa)) form the ABC transporter domain. Residue 36–43 (GENGAAKT) coordinates ATP.

It belongs to the ABC transporter superfamily.

Functionally, part of the ATP-driven transport system AdcABC for zinc. Required for transformability. The polypeptide is Zinc transport system ATP-binding protein AdcC (adcC) (Streptococcus pneumoniae (strain ATCC BAA-255 / R6)).